Consider the following 212-residue polypeptide: MNGLFITFEGPEGAGKTTILQAAADQLTKNGHSVLATREPGGIEISERIREVILNPSHTAMDPKTEALLYAAARRQHLVEKVKPALEEGKIVLCDRFIDSSLAYQGYARGLGIDEVFSVNQFAIGSLMPNVTIYFDIDPEEGIKRIDLNDAREKNRLDLEKLHFHQLVQKGYEEVMNRFPGRFRIVDASQSVELVLKRVNNIIEEALKENQL.

Gly-10 to Thr-17 contributes to the ATP binding site.

Belongs to the thymidylate kinase family.

It carries out the reaction dTMP + ATP = dTDP + ADP. Functionally, phosphorylation of dTMP to form dTDP in both de novo and salvage pathways of dTTP synthesis. The sequence is that of Thymidylate kinase from Bacillus licheniformis (strain ATCC 14580 / DSM 13 / JCM 2505 / CCUG 7422 / NBRC 12200 / NCIMB 9375 / NCTC 10341 / NRRL NRS-1264 / Gibson 46).